A 199-amino-acid chain; its full sequence is ATP-dependent Clp protease proteolytic subunit (199 aa).

Residues 1 to 23 (MTTSAARKGLRTRGSACPRATRS) form a disordered region. Ser-100 serves as the catalytic Nucleophile. Residue His-125 is part of the active site.

It belongs to the peptidase S14 family. In terms of assembly, fourteen ClpP subunits assemble into 2 heptameric rings which stack back to back to give a disk-like structure with a central cavity, resembling the structure of eukaryotic proteasomes.

It localises to the cytoplasm. It catalyses the reaction Hydrolysis of proteins to small peptides in the presence of ATP and magnesium. alpha-casein is the usual test substrate. In the absence of ATP, only oligopeptides shorter than five residues are hydrolyzed (such as succinyl-Leu-Tyr-|-NHMec, and Leu-Tyr-Leu-|-Tyr-Trp, in which cleavage of the -Tyr-|-Leu- and -Tyr-|-Trp bonds also occurs).. Its function is as follows. Cleaves peptides in various proteins in a process that requires ATP hydrolysis. Has a chymotrypsin-like activity. Plays a major role in the degradation of misfolded proteins. In Paracoccus denitrificans, this protein is ATP-dependent Clp protease proteolytic subunit.